The sequence spans 625 residues: MLNMWKVRELVDKATNVVMNYSEIESKVREATNDDPWGPSGQLMGEIAKATFMYEQFPELMNMLWSRMLKDNKKNWRRVYKSLLLLAYLIRNGSERVVTSAREHIYDLRSLENYHFVDEHGKDQGINIRQKVKELVEFAQDDDRLREERKKAKKNKDKYVGVSSDSVGGFRYSERYDPEPKSKWDEEWDKNKSAFPFSDKLGELSDKIGSTIDDTISKFRRKDREDSPERCSDSDEEKKARRGRSPKGEFKDEEETVTTKHIHITQATETTTTRHKRTANPSKTIDLGAAAHYTGDKASPDQNASTHTPQSSVKTSVPSSKSSGDLVDLFDGTSQSTGGSADLFGGFADFGSAAASGSFPSQVTATSGNGDFGDWSAFNQAPSGPVASSGEFFGSASQPAVELVSGSQSALGPPPAASNSSDLFDLMGSSQATMTSSQSMNFSMMSTNTVGLGLPMSRSQNTDMVQKSVSKTLPSTWSDPSVNISLDNLLPGMQPSKPQQPSLNTMIQQQNMQQPMNVMTQSFGAVNLSSPSNMLPVRPQTNALIGGPMPMSMPNVMTGTMGMAPLGNTPMMNQSMMGMNMNIGMSAAGMGLTGTMGMGMPNIAMTSGTVQPKQDAFANFANFSK.

The ENTH domain occupies 16-149 (NVVMNYSEIE…QDDDRLREER (134 aa)). Arg-29 contacts a 1,2-diacyl-sn-glycero-3-phospho-(1D-myo-inositol-4,5-bisphosphate). Residues 52 to 54 (FMY) form an interaction with VTI1B region. Residue Arg-67 coordinates a 1,2-diacyl-sn-glycero-3-phospho-(1D-myo-inositol-4,5-bisphosphate). Interaction with VTI1B stretches follow at residues 94–96 (SER) and 142–153 (DDRLREERKKAK). 8 positions are modified to phosphoserine: Ser-163, Ser-166, Ser-173, Ser-205, Ser-210, Ser-227, Ser-245, and Ser-299. The interval 219–331 (FRRKDREDSP…SSGDLVDLFD (113 aa)) is disordered. Residues 222–239 (KDREDSPERCSDSDEEKK) show a composition bias toward basic and acidic residues. Thr-308 is modified (phosphothreonine). Residues 308–323 (TPQSSVKTSVPSSKSS) are compositionally biased toward low complexity. Ser-312 carries the phosphoserine modification. The tract at residues 340–352 (SADLFGGFADFGS) is interaction with AP1G1, AP1G2 and GGA2. The tract at residues 368 to 380 (GNGDFGDWSAFNQ) is interaction with AP1G1 and AP1G2. Ser-624 carries the phosphoserine modification.

It belongs to the epsin family. As to quaternary structure, binds clathrin heavy chain and AP-2. Interacts with VTI1B. Interacts with GGA2 (via GAE domain). Interacts with AP1G1 (via GAE domain). Interacts with AP1G2 (via GAE domain). In terms of tissue distribution, ubiquitously expressed at low to intermediate levels.

Its subcellular location is the cytoplasm. The protein resides in the perinuclear region. It localises to the membrane. The protein localises to the cytoplasmic vesicle. It is found in the clathrin-coated vesicle. In terms of biological role, binds to membranes enriched in phosphatidylinositol 4,5-bisphosphate (PtdIns(4,5)P2). May have a role in transport via clathrin-coated vesicles from the trans-Golgi network to endosomes. Stimulates clathrin assembly. This chain is Clathrin interactor 1 (CLINT1), found in Homo sapiens (Human).